The following is a 214-amino-acid chain: Adenylate kinase (214 aa).

10-15 (GAGKGT) is an ATP binding site. Residues 30 to 59 (STGDMLRAAVKAQTPVGLKAKAVMDRGELV) are NMP. AMP-binding positions include T31, R36, 57–59 (ELV), 85–88 (GYPR), and Q92. Residues 126–163 (GRFTCAKCGTGYHDRHKQPAREGVCDVCGSTEFKRRPD) form an LID region. R127 provides a ligand contact to ATP. Residues C130, C133, C150, and C153 each coordinate Zn(2+). Residues R160 and R172 each coordinate AMP. G200 serves as a coordination point for ATP.

The protein belongs to the adenylate kinase family. In terms of assembly, monomer.

It is found in the cytoplasm. The catalysed reaction is AMP + ATP = 2 ADP. It functions in the pathway purine metabolism; AMP biosynthesis via salvage pathway; AMP from ADP: step 1/1. Its function is as follows. Catalyzes the reversible transfer of the terminal phosphate group between ATP and AMP. Plays an important role in cellular energy homeostasis and in adenine nucleotide metabolism. The chain is Adenylate kinase from Erythrobacter litoralis (strain HTCC2594).